The following is a 72-amino-acid chain: DNA-directed RNA polymerase subunit Rpo10 (72 aa).

Cys7, Cys10, Cys45, and Cys46 together coordinate Zn(2+).

It belongs to the archaeal Rpo10/eukaryotic RPB10 RNA polymerase subunit family. Part of the RNA polymerase complex. Zn(2+) is required as a cofactor.

It is found in the cytoplasm. It carries out the reaction RNA(n) + a ribonucleoside 5'-triphosphate = RNA(n+1) + diphosphate. DNA-dependent RNA polymerase (RNAP) catalyzes the transcription of DNA into RNA using the four ribonucleoside triphosphates as substrates. This Methanopyrus kandleri (strain AV19 / DSM 6324 / JCM 9639 / NBRC 100938) protein is DNA-directed RNA polymerase subunit Rpo10.